The primary structure comprises 691 residues: Kinetochore protein NDC80 (691 aa).

Residues 1–95 (MQSSTSTDQH…LNDKSNSRNS (95 aa)) form a disordered region. The span at 10–19 (HVLHHMDPHR) shows a compositional bias: basic and acidic residues. The span at 20–42 (FTSQIPTATSSQLRRRNSTNQGL) shows a compositional bias: polar residues. Threonine 38 bears the Phosphothreonine mark. A compositionally biased stretch (low complexity) spans 54 to 65 (TISGTGIPTGGI). The residue at position 248 (threonine 248) is a Phosphothreonine. Coiled coils occupy residues 376–446 (GKLE…SIKS) and 522–686 (KKSI…FETE).

This sequence belongs to the NDC80/HEC1 family. Component of the NDC80 complex, which consists of NDC80, NUF2, SPC24 and SPC25. The NDC80 complex is formed by two subcomplexes, NDC80-NUF2 and SPC24-SPC25, which are joined end-to-end through their coiled-coil domains. It has a rod-like structure with a length of 570 Angstroms and globular domains at either end. The NDC80-NUF2 globular domains are probably directed to microtubules, the SPC24-SPC25 globular domains to the centromere. NDC80 probably interacts with SMC1 and SMC2. Also interacts with KIN3. Interacts with DMC1.

It localises to the nucleus. The protein localises to the chromosome. Its subcellular location is the centromere. It is found in the kinetochore. In terms of biological role, acts as a component of the essential kinetochore-associated NDC80 complex, which is involved in chromosome segregation and spindle checkpoint activity. This Saccharomyces cerevisiae (strain ATCC 204508 / S288c) (Baker's yeast) protein is Kinetochore protein NDC80.